A 293-amino-acid polypeptide reads, in one-letter code: MKRKTKLDKKSKWVLDMKFGVSSLVFLPESLTSSMEKIAEHNFDAWEIVCEGTHYLSPKNIKYLMELRDRYEVEIVVHAPFSDLNPASMNERVRKLTVECIRDAIEGAFELDSEVVVVHPGYIPELWSNYVSEILDNNFSTLSEIVEIAEDYGIKIGLENMPNFRGVLGITPESLLEIVKDIDSKNLGITFDIGHANTAGNPAEFVEKLQNIGIGIIHVHAHDNNGYDDEHLKIGEGNINFIEVLEKLKEIGYDGVISIENKNIRDAVKSKEILKEYLEIVNEKVAEKEKIEE.

It to M.jannaschii MJ1614 and MJ0008.

This is an uncharacterized protein from Methanocaldococcus jannaschii (strain ATCC 43067 / DSM 2661 / JAL-1 / JCM 10045 / NBRC 100440) (Methanococcus jannaschii).